Here is a 463-residue protein sequence, read N- to C-terminus: Glycine--tRNA ligase (463 aa).

Substrate-binding residues include Arg-98 and Glu-174. ATP contacts are provided by residues 206-208 (RNE), 216-221 (FRTREF), 290-291 (EL), and 334-337 (GADR). 221–225 (FEQME) provides a ligand contact to substrate. Residue 330-334 (EPSLG) participates in substrate binding.

Belongs to the class-II aminoacyl-tRNA synthetase family. As to quaternary structure, homodimer.

It is found in the cytoplasm. The enzyme catalyses tRNA(Gly) + glycine + ATP = glycyl-tRNA(Gly) + AMP + diphosphate. Catalyzes the attachment of glycine to tRNA(Gly). The sequence is that of Glycine--tRNA ligase from Staphylococcus epidermidis (strain ATCC 35984 / DSM 28319 / BCRC 17069 / CCUG 31568 / BM 3577 / RP62A).